We begin with the raw amino-acid sequence, 561 residues long: Putative periplasmic trehalase (561 aa).

The first 30 residues, 1–30 (MKSPAPSRPQKMALIPACIFLCFAALSVQA), serve as a signal peptide directing secretion. Substrate is bound by residues Arg-148, 155 to 156 (WD), Asn-192, 201 to 203 (RSQ), 273 to 275 (RPE), and Gly-306. Residues Asp-308 and Glu-492 each act as proton donor/acceptor in the active site. Glu-507 is a binding site for substrate. Positions 535–561 (CDNVPATRPLSESTTQPVKQKEAEPTP) are disordered.

This sequence belongs to the glycosyl hydrolase 37 family. As to quaternary structure, monomer.

The protein resides in the periplasm. The catalysed reaction is alpha,alpha-trehalose + H2O = alpha-D-glucose + beta-D-glucose. In terms of biological role, provides the cells with the ability to utilize trehalose at high osmolarity by splitting it into glucose molecules that can subsequently be taken up by the phosphotransferase-mediated uptake system. This Escherichia coli O157:H7 protein is Putative periplasmic trehalase.